A 1028-amino-acid polypeptide reads, in one-letter code: RNA cytidine acetyltransferase 1 (1028 aa).

ATP contacts are provided by residues 286–295 (GRGKSAALGL) and arginine 460. The 184-residue stretch at 548 to 731 (VLLGPVDESK…FAPFYISQIP (184 aa)) folds into the N-acetyltransferase domain. Residues 619 to 621 (IAV), 626 to 632 (MKMGYGS), and lysine 719 each bind acetyl-CoA. Positions 989–1028 (ISIESTKTDNKKEKPSGFDKSAKKRGNDKHSSTSNKKRRA) are disordered. Positions 994-1009 (TKTDNKKEKPSGFDKS) are enriched in basic and acidic residues.

The protein belongs to the RNA cytidine acetyltransferase family. NAT10 subfamily.

The protein localises to the nucleus. The protein resides in the nucleolus. It carries out the reaction a cytidine in 18S rRNA + acetyl-CoA + ATP + H2O = an N(4)-acetylcytidine in 18S rRNA + ADP + phosphate + CoA + H(+). It catalyses the reaction a cytidine in tRNA + acetyl-CoA + ATP + H2O = an N(4)-acetylcytidine in tRNA + ADP + phosphate + CoA + H(+). RNA cytidine acetyltransferase with specificity toward both 18S rRNA and tRNAs. Catalyzes the formation of N(4)-acetylcytidine (ac4C) in 18S rRNA. Required for early nucleolar cleavages of precursor rRNA at sites A0, A1 and A2 during 18S rRNA synthesis. Catalyzes the formation of ac4C in serine and leucine tRNAs. Requires a tRNA-binding adapter protein for full tRNA acetyltransferase activity but not for 18S rRNA acetylation. The chain is RNA cytidine acetyltransferase 1 from Arabidopsis thaliana (Mouse-ear cress).